The chain runs to 106 residues: MMEKIRKGDEIVVITGKDKGKRGTVLRRVDDEHVLVEGVNRAKKHVKPNPVKGVAGGIVDKDMPIHISNVALFNPATKKADRVGFKALDDGRKVRVFKSNGELVNA.

This sequence belongs to the universal ribosomal protein uL24 family. As to quaternary structure, part of the 50S ribosomal subunit.

Functionally, one of two assembly initiator proteins, it binds directly to the 5'-end of the 23S rRNA, where it nucleates assembly of the 50S subunit. Its function is as follows. One of the proteins that surrounds the polypeptide exit tunnel on the outside of the subunit. The polypeptide is Large ribosomal subunit protein uL24 (Dechloromonas aromatica (strain RCB)).